A 137-amino-acid chain; its full sequence is Nucleoside diphosphate kinase (137 aa).

ATP contacts are provided by lysine 9, phenylalanine 57, arginine 85, threonine 91, arginine 102, and asparagine 112. The Pros-phosphohistidine intermediate role is filled by histidine 115.

The protein belongs to the NDK family. As to quaternary structure, homotetramer. The cofactor is Mg(2+).

It localises to the cytoplasm. The catalysed reaction is a 2'-deoxyribonucleoside 5'-diphosphate + ATP = a 2'-deoxyribonucleoside 5'-triphosphate + ADP. It carries out the reaction a ribonucleoside 5'-diphosphate + ATP = a ribonucleoside 5'-triphosphate + ADP. Functionally, major role in the synthesis of nucleoside triphosphates other than ATP. The ATP gamma phosphate is transferred to the NDP beta phosphate via a ping-pong mechanism, using a phosphorylated active-site intermediate. This chain is Nucleoside diphosphate kinase, found in Nitratiruptor sp. (strain SB155-2).